We begin with the raw amino-acid sequence, 97 residues long: U-reduvitoxin-Pr11a (97 aa).

Residues 1 to 20 form the signal peptide; that stretch reads MKTALFLVFALAFIAVEGKM. 2 consecutive Pacifastin domains span residues 22 to 59 and 62 to 97; these read RACS…CPPR and EKSC…KLCL. Cystine bridges form between cysteine 24-cysteine 42, cysteine 37-cysteine 56, and cysteine 40-cysteine 51. The interval 57-59 is pro-Pro-Arg motif necessary for proteolytic processing; that stretch reads PPR. Intrachain disulfides connect cysteine 65/cysteine 82, cysteine 77/cysteine 96, and cysteine 80/cysteine 91.

The protein belongs to the protease inhibitor I19 family. Expressed by the venom gland.

The protein resides in the secreted. Functionally, inhibits trypsin activity and prophenoloxidase (PPO) activation, an enzyme essential for both clotting and insect innate immune responses. It does not inhibit activity of chymotrypsin and protease K, and has no effect on phenoloxidase (PO) activity. The sequence is that of U-reduvitoxin-Pr11a from Platymeris rhadamanthus (Red spot assassin bug).